The primary structure comprises 265 residues: Palmitoyltransferase ZDHHC21 (265 aa).

The Cytoplasmic portion of the chain corresponds to methionine 1–cysteine 16. The chain crosses the membrane as a helical span at residues methionine 17–phenylalanine 37. The Extracellular segment spans residues proline 38–histidine 44. The chain crosses the membrane as a helical span at residues isoleucine 45–valine 65. The Cytoplasmic portion of the chain corresponds to arginine 66–tryptophan 133. The DHHC domain maps to glutamate 90–phenylalanine 140. The S-palmitoyl cysteine intermediate role is filled by cysteine 120. A helical transmembrane segment spans residues leucine 134 to phenylalanine 154. At cysteine 155–phenylalanine 185 the chain is on the extracellular side. Residues methionine 186–isoleucine 206 traverse the membrane as a helical segment. Topologically, residues threonine 207 to valine 265 are cytoplasmic.

Belongs to the DHHC palmitoyltransferase family. As to expression, widely expressed. Expressed in Henle's layer within the hair bulb and the hair shaft cuticle (at protein level). Expression is limited to the post-mitotic lineages of inner root sheath (IRS) and cuticle.

The protein localises to the golgi apparatus membrane. Its subcellular location is the golgi apparatus. It localises to the cis-Golgi network membrane. The protein resides in the cell membrane. It carries out the reaction L-cysteinyl-[protein] + hexadecanoyl-CoA = S-hexadecanoyl-L-cysteinyl-[protein] + CoA. Palmitoyltransferase that catalyzes the addition of palmitate onto various protein substrates. Palmitoylates sex steroid hormone receptors, including ESR1, PGR and AR, thereby regulating their targeting to the plasma membrane. This affects rapid intracellular signaling by sex hormones via ERK and AKT kinases and the generation of cAMP, but does not affect that mediated by their nuclear receptor. Palmitoylates FYN, regulates its localization in hair follicles and plays a key role in epidermal homeostasis and hair follicle differentiation. Through the palmitoylation of PLCB1 and the regulation of PLCB1 downstream signaling may indirectly regulate the function of the endothelial barrier and the adhesion of leukocytes to the endothelium. Also has a palmitoyltransferase activity toward ADRA1D, positively regulating its activity and expression and may thereby play a role in vascular contraction. May also palmitoylate eNOS and LCK. This Mus musculus (Mouse) protein is Palmitoyltransferase ZDHHC21.